The chain runs to 977 residues: Myb-like protein I (977 aa).

The interval Met-1–Ser-122 is disordered. The segment covering Pro-21–Pro-39 has biased composition (pro residues). Residues Asp-52–Gln-68 show a composition bias toward basic and acidic residues. Residues Gln-75–Gln-118 are compositionally biased toward low complexity. The HTH myb-type domain occupies Glu-167–Asp-222. Residues Val-195 to Phe-218 constitute a DNA-binding region (H-T-H motif). Disordered stretches follow at residues Leu-229–Leu-331, Ile-422–Pro-516, Asn-531–Met-650, Leu-738–Pro-853, and Asn-872–Gln-960. The span at Lys-241–Asp-252 shows a compositional bias: acidic residues. Residues Gly-254–Phe-275 are compositionally biased toward polar residues. Composition is skewed to low complexity over residues Ser-276 to Ser-329 and Ile-422 to Asn-504. The span at Gly-505 to Pro-516 shows a compositional bias: polar residues. Positions Leu-738 to Gly-754 are enriched in low complexity. A compositionally biased stretch (polar residues) spans Leu-783–Tyr-797. Low complexity-rich tracts occupy residues Asn-798–Ile-848 and Ser-887–Ser-943. Residues Trp-944–Gln-960 show a composition bias toward polar residues.

The protein resides in the nucleus. The protein is Myb-like protein I (mybI) of Dictyostelium discoideum (Social amoeba).